Reading from the N-terminus, the 129-residue chain is Large ribosomal subunit protein bL12 (129 aa).

Basic and acidic residues predominate over residues 95–123 (MVESTPKSIKEGVSKEDAEEAKKSLEDAG). A disordered region spans residues 95–129 (MVESTPKSIKEGVSKEDAEEAKKSLEDAGGKASLK).

The protein belongs to the bacterial ribosomal protein bL12 family. In terms of assembly, homodimer. Part of the ribosomal stalk of the 50S ribosomal subunit. Forms a multimeric L10(L12)X complex, where L10 forms an elongated spine to which 2 to 4 L12 dimers bind in a sequential fashion. Binds GTP-bound translation factors.

Its function is as follows. Forms part of the ribosomal stalk which helps the ribosome interact with GTP-bound translation factors. Is thus essential for accurate translation. This chain is Large ribosomal subunit protein bL12, found in Acaryochloris marina (strain MBIC 11017).